Reading from the N-terminus, the 96-residue chain is DNA/RNA-binding protein Alba (96 aa).

This sequence belongs to the histone-like Alba family.

The protein localises to the cytoplasm. It is found in the chromosome. In terms of biological role, binds double-stranded DNA tightly but without sequence specificity. Involved in DNA compaction. This is DNA/RNA-binding protein Alba from Methanocella arvoryzae (strain DSM 22066 / NBRC 105507 / MRE50).